The following is a 138-amino-acid chain: Flagellar assembly factor FliW (138 aa).

It belongs to the FliW family. In terms of assembly, interacts with translational regulator CsrA and flagellin(s).

It is found in the cytoplasm. Acts as an anti-CsrA protein, binds CsrA and prevents it from repressing translation of its target genes, one of which is flagellin. Binds to flagellin and participates in the assembly of the flagellum. The protein is Flagellar assembly factor FliW of Symbiobacterium thermophilum (strain DSM 24528 / JCM 14929 / IAM 14863 / T).